The sequence spans 1366 residues: Collagen alpha-2(I) chain (1366 aa).

The signal sequence occupies residues 1–22 (MLSFVDTRTLLLLAVTSCLATC). At Gln23 the chain carries Pyrrolidone carboxylic acid. A propeptide spans 23 to 79 (QSLQEATARKGPTGDRGPRGERGPPGPPGRDGDDGIPGPPGPPGPPGPPGLGGNFAA) (N-terminal propeptide). The interval 27 to 1131 (EATARKGPTG…PRSPPSLRPK (1105 aa)) is disordered. The segment covering 34–44 (PTGDRGPRGER) has biased composition (basic and acidic residues). Pro residues predominate over residues 59–71 (PGPPGPPGPPGPP). The residue at position 84 (Lys84) is an Allysine. Gly residues predominate over residues 84–94 (KGVGLGPGPMG). Positions 95 to 132 (LMGPRGPPGASGAPGPQGFQGPAGEPGEPGQTGPAGAR) are enriched in low complexity. Residues 141-155 (AGEDGHPGKPGRPGE) are compositionally biased toward basic and acidic residues. Position 177 is a 5-hydroxylysine; alternate (Lys177). The O-linked (Gal...) hydroxylysine; alternate glycan is linked to Lys177. Composition is skewed to low complexity over residues 225 to 254 (VGAP…SAGP), 279 to 293 (AGPR…VSGP), 300 to 321 (PGAN…AGAP), 330 to 345 (PGPV…RGIV), 384 to 408 (NGEA…RGLP), 423 to 434 (RGATGPAGVRGP), 470 to 489 (LPGI…RGEP), and 513 to 531 (AGLA…NGAQ). The span at 538–547 (GVQGGKGEQG) shows a compositional bias: gly residues. Positions 594-611 (PGESGAAGPSGPIGSRGP) are enriched in low complexity. Over residues 634–643 (GASGPGGLPG) the composition is skewed to gly residues. Composition is skewed to low complexity over residues 668 to 690 (NPGR…AGAT) and 717 to 737 (VGPA…QPGA). A compositionally biased stretch (basic and acidic residues) spans 738–747 (KGERGTKGPK). Residues 756-765 (TGPIGSAGPS) show a composition bias toward low complexity. The segment covering 775–784 (GSRGDGGPPG) has biased composition (gly residues). 5 stretches are compositionally biased toward low complexity: residues 785-795 (ATGFPGAAGRT), 863-876 (PQGL…LGLP), 893-932 (EPGP…NPGN), 951-974 (PGNI…PTGK), and 981-1001 (PGPA…PSGP). Basic and acidic residues predominate over residues 1005–1016 (RGDKGEPGEKGP). Over residues 1089 to 1103 (AGPPGPPGPPGPPGP) the composition is skewed to pro residues. Positions 1120 to 1366 (DQPRSPPSLR…RVDVGPVCFK (247 aa)) are cleaved as a propeptide — C-terminal propeptide. The region spanning 1133-1366 (YEVDATLKSL…RVDVGPVCFK (234 aa)) is the Fibrillar collagen NC1 domain. Disulfide bonds link Cys1163–Cys1195, Cys1203–Cys1364, and Cys1272–Cys1317. 5 residues coordinate Ca(2+): Asp1181, Asn1183, Gln1184, Cys1186, and Asp1189.

Belongs to the fibrillar collagen family. Trimers of one alpha 2(I) and two alpha 1(I) chains. Interacts (via C-terminus) with TMEM131 (via PapD-L domain); the interaction is direct and is involved in assembly and TRAPPIII ER-to-Golgi transport complex-dependent secretion of collagen. Post-translationally, prolines at the third position of the tripeptide repeating unit (G-X-Y) are hydroxylated in some or all of the chains. As to expression, forms the fibrils of tendon, ligaments and bones. In bones the fibrils are mineralized with calcium hydroxyapatite.

It is found in the secreted. The protein localises to the extracellular space. It localises to the extracellular matrix. Functionally, type I collagen is a member of group I collagen (fibrillar forming collagen). The polypeptide is Collagen alpha-2(I) chain (COL1A2) (Canis lupus familiaris (Dog)).